The sequence spans 917 residues: Gamma-tubulin complex component 3 (917 aa).

The protein belongs to the TUBGCP family. Gamma-tubulin small complex (Gamma TuSC) is a heterotetrameric complex which contains two molecules of gamma-tubulin, and one molecule each of Dgrip84 and Dgrip91. The gamma-tubulin in this complex binds preferentially to GDP over GTP.

Its subcellular location is the cytoplasm. It localises to the cytoskeleton. The protein localises to the microtubule organizing center. It is found in the centrosome. The protein resides in the perinuclear region. The protein is Gamma-tubulin complex component 3 of Drosophila melanogaster (Fruit fly).